Here is a 245-residue protein sequence, read N- to C-terminus: 1-(5-phosphoribosyl)-5-[(5-phosphoribosylamino)methylideneamino] imidazole-4-carboxamide isomerase (245 aa).

The active-site Proton acceptor is D7. D129 acts as the Proton donor in catalysis.

This sequence belongs to the HisA/HisF family.

It localises to the cytoplasm. It catalyses the reaction 1-(5-phospho-beta-D-ribosyl)-5-[(5-phospho-beta-D-ribosylamino)methylideneamino]imidazole-4-carboxamide = 5-[(5-phospho-1-deoxy-D-ribulos-1-ylimino)methylamino]-1-(5-phospho-beta-D-ribosyl)imidazole-4-carboxamide. The protein operates within amino-acid biosynthesis; L-histidine biosynthesis; L-histidine from 5-phospho-alpha-D-ribose 1-diphosphate: step 4/9. This Shewanella sp. (strain MR-7) protein is 1-(5-phosphoribosyl)-5-[(5-phosphoribosylamino)methylideneamino] imidazole-4-carboxamide isomerase.